The following is a 226-amino-acid chain: Amelogenin (226 aa).

The signal sequence occupies residues 1–16 (MGTWILFACLLGTAFA). Ser32 bears the Phosphoserine mark. The tract at residues 86–196 (QQHPPSHTTL…LPPQQALPPM (111 aa)) is disordered. Composition is skewed to low complexity over residues 88-120 (HPPSHTTLPPHHHIPVGPAQQPVVPQQPLMPVP) and 137-182 (PTSQ…SPLH). A compositionally biased stretch (pro residues) spans 183 to 192 (PIQPLPPQQA).

It belongs to the amelogenin family.

Its subcellular location is the secreted. It is found in the extracellular space. It localises to the extracellular matrix. In terms of biological role, plays a role in the biomineralization of teeth. Seems to regulate the formation of crystallites during the secretory stage of tooth enamel development. Thought to play a major role in the structural organization and mineralization of developing enamel. The polypeptide is Amelogenin (AMEL) (Cavia porcellus (Guinea pig)).